We begin with the raw amino-acid sequence, 239 residues long: Serine protease SplD (239 aa).

The signal sequence occupies residues 1–36; sequence MNKNIIIKSIAALTILTSITGVGTTVVDGIQQTAKA. Catalysis depends on charge relay system residues His-75, Asp-114, and Ser-192.

This sequence belongs to the peptidase S1B family.

The protein resides in the secreted. This is Serine protease SplD (splD) from Staphylococcus aureus (strain Mu3 / ATCC 700698).